An 872-amino-acid chain; its full sequence is Alanine--tRNA ligase (872 aa).

The Zn(2+) site is built by H567, H571, C669, and H673.

It belongs to the class-II aminoacyl-tRNA synthetase family. The cofactor is Zn(2+).

It localises to the cytoplasm. It carries out the reaction tRNA(Ala) + L-alanine + ATP = L-alanyl-tRNA(Ala) + AMP + diphosphate. Catalyzes the attachment of alanine to tRNA(Ala) in a two-step reaction: alanine is first activated by ATP to form Ala-AMP and then transferred to the acceptor end of tRNA(Ala). Also edits incorrectly charged Ser-tRNA(Ala) and Gly-tRNA(Ala) via its editing domain. This is Alanine--tRNA ligase from Streptococcus agalactiae serotype Ia (strain ATCC 27591 / A909 / CDC SS700).